Reading from the N-terminus, the 194-residue chain is Imidazoleglycerol-phosphate dehydratase (194 aa).

This sequence belongs to the imidazoleglycerol-phosphate dehydratase family.

The protein localises to the cytoplasm. It catalyses the reaction D-erythro-1-(imidazol-4-yl)glycerol 3-phosphate = 3-(imidazol-4-yl)-2-oxopropyl phosphate + H2O. The protein operates within amino-acid biosynthesis; L-histidine biosynthesis; L-histidine from 5-phospho-alpha-D-ribose 1-diphosphate: step 6/9. This Methanothermobacter thermautotrophicus (strain ATCC 29096 / DSM 1053 / JCM 10044 / NBRC 100330 / Delta H) (Methanobacterium thermoautotrophicum) protein is Imidazoleglycerol-phosphate dehydratase.